Consider the following 164-residue polypeptide: 2-C-methyl-D-erythritol 2,4-cyclodiphosphate synthase (164 aa).

The a divalent metal cation site is built by aspartate 9 and histidine 11. Residues aspartate 9–histidine 11 and histidine 36–serine 37 contribute to the 4-CDP-2-C-methyl-D-erythritol 2-phosphate site. Histidine 44 serves as a coordination point for a divalent metal cation. 4-CDP-2-C-methyl-D-erythritol 2-phosphate contacts are provided by residues aspartate 58–glycine 60, phenylalanine 63–aspartate 67, threonine 134–glutamate 137, phenylalanine 141, and arginine 144.

It belongs to the IspF family. In terms of assembly, homotrimer. Requires a divalent metal cation as cofactor.

The catalysed reaction is 4-CDP-2-C-methyl-D-erythritol 2-phosphate = 2-C-methyl-D-erythritol 2,4-cyclic diphosphate + CMP. The protein operates within isoprenoid biosynthesis; isopentenyl diphosphate biosynthesis via DXP pathway; isopentenyl diphosphate from 1-deoxy-D-xylulose 5-phosphate: step 4/6. In terms of biological role, involved in the biosynthesis of isopentenyl diphosphate (IPP) and dimethylallyl diphosphate (DMAPP), two major building blocks of isoprenoid compounds. Catalyzes the conversion of 4-diphosphocytidyl-2-C-methyl-D-erythritol 2-phosphate (CDP-ME2P) to 2-C-methyl-D-erythritol 2,4-cyclodiphosphate (ME-CPP) with a corresponding release of cytidine 5-monophosphate (CMP). This Alkalilimnicola ehrlichii (strain ATCC BAA-1101 / DSM 17681 / MLHE-1) protein is 2-C-methyl-D-erythritol 2,4-cyclodiphosphate synthase.